The following is a 353-amino-acid chain: Photosystem II D2 protein (353 aa).

Residue Thr-2 is modified to N-acetylthreonine. Thr-2 carries the phosphothreonine modification. The chain crosses the membrane as a helical span at residues 41–61 (CAYFAVGGWFTGTTFVTSWYT). His-118 contacts chlorophyll a. A helical membrane pass occupies residues 125 to 141 (GFMLRQFELARSVQLRP). Pheophytin a is bound by residues Gln-130 and Asn-143. A helical membrane pass occupies residues 153–166 (VFVSVFLIYPLGQS). Position 198 (His-198) interacts with chlorophyll a. Residues 208–228 (AALLCAIHGATVENTLFEDGD) form a helical membrane-spanning segment. The a plastoquinone site is built by His-215 and Phe-262. His-215 serves as a coordination point for Fe cation. His-269 is a Fe cation binding site. Residues 279-295 (GLWMSALGVVGLALNLR) traverse the membrane as a helical segment.

The protein belongs to the reaction center PufL/M/PsbA/D family. As to quaternary structure, PSII is composed of 1 copy each of membrane proteins PsbA, PsbB, PsbC, PsbD, PsbE, PsbF, PsbH, PsbI, PsbJ, PsbK, PsbL, PsbM, PsbT, PsbX, PsbY, PsbZ, Psb30/Ycf12, at least 3 peripheral proteins of the oxygen-evolving complex and a large number of cofactors. It forms dimeric complexes. It depends on The D1/D2 heterodimer binds P680, chlorophylls that are the primary electron donor of PSII, and subsequent electron acceptors. It shares a non-heme iron and each subunit binds pheophytin, quinone, additional chlorophylls, carotenoids and lipids. There is also a Cl(-1) ion associated with D1 and D2, which is required for oxygen evolution. The PSII complex binds additional chlorophylls, carotenoids and specific lipids. as a cofactor.

It localises to the plastid. It is found in the chloroplast thylakoid membrane. It catalyses the reaction 2 a plastoquinone + 4 hnu + 2 H2O = 2 a plastoquinol + O2. Functionally, photosystem II (PSII) is a light-driven water:plastoquinone oxidoreductase that uses light energy to abstract electrons from H(2)O, generating O(2) and a proton gradient subsequently used for ATP formation. It consists of a core antenna complex that captures photons, and an electron transfer chain that converts photonic excitation into a charge separation. The D1/D2 (PsbA/PsbD) reaction center heterodimer binds P680, the primary electron donor of PSII as well as several subsequent electron acceptors. D2 is needed for assembly of a stable PSII complex. This is Photosystem II D2 protein from Cicer arietinum (Chickpea).